We begin with the raw amino-acid sequence, 221 residues long: Transcription factor otaR1 (221 aa).

The tract at residues 109–146 (ASRSRPAFSTPASRPGLSSAKSPSLGATSPGSMDRSEE) is disordered. The span at 127–139 (SAKSPSLGATSPG) shows a compositional bias: polar residues. A basic motif region spans residues 152–192 (KKYHEKYKERNRLAAGRSRQKQADLINLLQAEQQEEERRRK). The region spanning 152-215 (KKYHEKYKER…VDMKQELQHH (64 aa)) is the bZIP domain. A leucine-zipper region spans residues 198-212 (IANMQKELVDMKQEL).

The protein resides in the nucleus. Functionally, transcription factor; part of the gene cluster that mediates the biosynthesis of ochratoxin A (OTA), a mycotoxin demonstrated to have nephrotoxic, immunotoxic, genotoxic, neurotoxic, and teratogenic properties. Positively regulates the expression of the OTA biosynthetic genes and subsequent production of OTA. Probably binds to conserved 5'-ACGT-3' bZIP binding motifs found in multiple copies (3 to 4) in the promoters of the OTA biosynthetic genes. Acts not only as a pathway-specific regulator of the OTA cluster but also binds at other chromosomal positions outside the OTA cluster and can act as a broad regulator. Negatively regulates pathogenicity and plays a critical role in tolerance to reactive oxygen species (ROS). The sequence is that of Transcription factor otaR1 from Aspergillus niger (strain ATCC MYA-4892 / CBS 513.88 / FGSC A1513).